A 326-amino-acid polypeptide reads, in one-letter code: Target of rapamycin complex subunit lst8 (326 aa).

WD repeat units lie at residues Met1–Thr37, His40–Asn80, Gly83–Gln122, Gln126–Leu165, Glu168–Val207, Ala218–Glu257, and Thr268–Ser309.

Belongs to the WD repeat LST8 family. As to quaternary structure, part of the mechanistic target of rapamycin complex 1 (mTORC1) which contains MTOR, MLST8 and RPTOR. Component of the mechanistic target of rapamycin complex 2 (mTORC2), consisting in two heterotretramers composed of MTOR, MLST8, RICTOR and MAPKAP1/SIN1.

It localises to the lysosome membrane. The protein localises to the cytoplasm. Subunit of both mTORC1 and mTORC2, which regulates cell growth and survival in response to nutrient and hormonal signals. mTORC1 is activated in response to growth factors or amino acids. In response to nutrients, mTORC1 is recruited to the lysosome membrane and promotes protein, lipid and nucleotide synthesis by phosphorylating several substrates, such as ribosomal protein S6 kinase (RPS6KB1 and RPS6KB2) and EIF4EBP1 (4E-BP1). In the same time, it inhibits catabolic pathways by phosphorylating the autophagy initiation components ULK1 and ATG13, as well as transcription factor TFEB, a master regulators of lysosomal biogenesis and autophagy. The mTORC1 complex is inhibited in response to starvation and amino acid depletion. Within mTORC1, MLST8 interacts directly with MTOR and enhances its kinase activity. In nutrient-poor conditions, stabilizes the MTOR-RPTOR interaction and favors RPTOR-mediated inhibition of MTOR activity. As part of the mTORC2 complex, transduces signals from growth factors to pathways involved in proliferation, cytoskeletal organization, lipogenesis and anabolic output. mTORC2 is also activated by growth factors, but seems to be nutrient-insensitive. In response to growth factors, mTORC2 phosphorylates and activates AGC protein kinase family members, including AKT (AKT1, AKT2 and AKT3), PKC (PRKCA, PRKCB and PRKCE) and SGK1. mTORC2 functions upstream of Rho GTPases to regulate the actin cytoskeleton, probably by activating one or more Rho-type guanine nucleotide exchange factors. mTORC2 promotes the serum-induced formation of stress-fibers or F-actin. Within mTORC2, MLST8 acts as a bridge between MAPKAP1/SIN1 and MTOR. This chain is Target of rapamycin complex subunit lst8 (mlst8), found in Danio rerio (Zebrafish).